The chain runs to 468 residues: Secreted triacylglycerol lipase LIP2 (468 aa).

The N-terminal stretch at 1–22 (MFGFRLFILAAVALAYIQCAAA) is a signal peptide. Residues Cys125 and Cys295 are joined by a disulfide bond. Residue Ser209 is the Nucleophile of the active site. N-linked (GlcNAc...) asparagine glycosylation is found at Asn242, Asn252, and Asn279. Residues Asp355 and His389 contribute to the active site.

Belongs to the AB hydrolase superfamily. Lipase family. Class Lip subfamily.

Its subcellular location is the secreted. The enzyme catalyses a triacylglycerol + H2O = a diacylglycerol + a fatty acid + H(+). The catalysed reaction is a monoacylglycerol + H2O = glycerol + a fatty acid + H(+). It carries out the reaction a diacylglycerol + H2O = a monoacylglycerol + a fatty acid + H(+). In terms of biological role, secreted lipase that hydrolyzes acylglycerol lipids such as triacylglycerols and consequently releases free fatty acid. Due to an absence of fatty acid synthase genes in Malassezia species, secretory lipases are essential for the yeast to generate free fatty acids from degradation of sebum and assimilate them as lipid sources for growth. Plays important roles not only in lipid metabolism but also in the immune response of host cells and pathogenesis. This chain is Secreted triacylglycerol lipase LIP2, found in Malassezia furfur (Pityriasis versicolor infection agent).